A 430-amino-acid chain; its full sequence is Agropine synthesis reductase (430 aa).

203–227 (LISGPSRGIGKAIAENLIAHGYRMS) provides a ligand contact to NAD(+). Residue Ser-333 participates in substrate binding. The Proton acceptor role is filled by Tyr-346.

It belongs to the short-chain dehydrogenases/reductases (SDR) family.

It functions in the pathway opine metabolism; mannopine biosynthesis. Reduces deoxy-fructosyl-glutamine to mannopine. The chain is Agropine synthesis reductase (mas1) from Rhizobium rhizogenes (Agrobacterium rhizogenes).